The sequence spans 1488 residues: Chromosome partition protein MukB (1488 aa).

34–41 is an ATP binding site; that stretch reads GGNGAGKS. Coiled-coil stretches lie at residues 326 to 418, 444 to 472, and 509 to 602; these read LEAD…QYNQ, LDTFQAKEQEATEKLLSLEQKMSVAQTAH, and RHLA…RRAP. The flexible hinge stretch occupies residues 666–783; the sequence is PGGAEDQRLN…SLPIFGRAAR (118 aa). Coiled-coil stretches lie at residues 835–923, 977–1116, and 1209–1265; these read EAEI…AKLE, EMLS…AKAG, and VEAI…LQSV. The interval 1049–1074 is disordered; sequence ADSGAEERARQRRDELHAQLSNNRSR. The span at 1051-1065 shows a compositional bias: basic and acidic residues; that stretch reads SGAEERARQRRDELH.

The protein belongs to the SMC family. MukB subfamily. Homodimerization via its hinge domain. Binds to DNA via its C-terminal region. Interacts, and probably forms a ternary complex, with MukE and MukF via its C-terminal region. The complex formation is stimulated by calcium or magnesium. Interacts with tubulin-related protein FtsZ.

The protein resides in the cytoplasm. It localises to the nucleoid. Plays a central role in chromosome condensation, segregation and cell cycle progression. Functions as a homodimer, which is essential for chromosome partition. Involved in negative DNA supercoiling in vivo, and by this means organize and compact chromosomes. May achieve or facilitate chromosome segregation by condensation DNA from both sides of a centrally located replisome during cell division. This is Chromosome partition protein MukB from Salmonella agona (strain SL483).